A 79-amino-acid polypeptide reads, in one-letter code: Acyl carrier protein (79 aa).

One can recognise a Carrier domain in the interval 2–77 (SEIGERVKKI…DATKFLEKNA (76 aa)). An O-(pantetheine 4'-phosphoryl)serine modification is found at serine 37.

It belongs to the acyl carrier protein (ACP) family. In terms of processing, 4'-phosphopantetheine is transferred from CoA to a specific serine of apo-ACP by AcpS. This modification is essential for activity because fatty acids are bound in thioester linkage to the sulfhydryl of the prosthetic group.

The protein resides in the cytoplasm. It functions in the pathway lipid metabolism; fatty acid biosynthesis. Functionally, carrier of the growing fatty acid chain in fatty acid biosynthesis. This chain is Acyl carrier protein, found in Rhodopseudomonas palustris (strain HaA2).